The sequence spans 44 residues: DNA-directed RNA polymerase subunit Rpo12 (44 aa).

3 residues coordinate Zn(2+): cysteine 8, cysteine 22, and cysteine 25.

The protein belongs to the archaeal Rpo12/eukaryotic RPC10 RNA polymerase subunit family. Part of the RNA polymerase complex. Zn(2+) serves as cofactor.

The protein resides in the cytoplasm. The catalysed reaction is RNA(n) + a ribonucleoside 5'-triphosphate = RNA(n+1) + diphosphate. Its function is as follows. DNA-dependent RNA polymerase (RNAP) catalyzes the transcription of DNA into RNA using the four ribonucleoside triphosphates as substrates. In Halobacterium salinarum (strain ATCC 29341 / DSM 671 / R1), this protein is DNA-directed RNA polymerase subunit Rpo12.